A 57-amino-acid polypeptide reads, in one-letter code: Large ribosomal subunit protein bL32 (57 aa).

Residues 1–23 (MAVPKKRTSKTRTNRRRAQKKAR) form a disordered region.

The protein belongs to the bacterial ribosomal protein bL32 family.

This is Large ribosomal subunit protein bL32 from Natranaerobius thermophilus (strain ATCC BAA-1301 / DSM 18059 / JW/NM-WN-LF).